The following is a 304-amino-acid chain: Fructose permease IIC component (304 aa).

The region spanning 1–304 is the PTS EIIC type-2 domain; it reads IHSADPKDPT…GIIKKPVEEK (304 aa). 8 helical membrane-spanning segments follow: residues 20–40, 62–82, 98–118, 140–160, 181–201, 214–234, 238–258, and 277–297; these read FIGS…FIAM, NAGF…VILL, PVLI…QFVI, NLVL…GGPL, AAIM…TTFF, ITCY…FAAA, VIPA…FFRV, and LLYL…LGII.

Its subcellular location is the cell membrane. Its function is as follows. The phosphoenolpyruvate-dependent sugar phosphotransferase system (PTS), a major carbohydrate active -transport system, catalyzes the phosphorylation of incoming sugar substrates concomitant with their translocation across the cell membrane. This system is involved in fructose transport. This is Fructose permease IIC component (fruA) from Bacillus amyloliquefaciens (Bacillus velezensis).